We begin with the raw amino-acid sequence, 940 residues long: Isoleucine--tRNA ligase (940 aa).

The 'HIGH' region signature appears at 58–68; it reads PYANGAIHIGH. Position 564 (Glu564) interacts with L-isoleucyl-5'-AMP. The short motif at 605–609 is the 'KMSKS' region element; that stretch reads KMSKS. Lys608 lines the ATP pocket. Zn(2+) contacts are provided by Cys903, Cys906, Cys923, and Cys926.

This sequence belongs to the class-I aminoacyl-tRNA synthetase family. IleS type 1 subfamily. In terms of assembly, monomer. The cofactor is Zn(2+).

The protein localises to the cytoplasm. It catalyses the reaction tRNA(Ile) + L-isoleucine + ATP = L-isoleucyl-tRNA(Ile) + AMP + diphosphate. Functionally, catalyzes the attachment of isoleucine to tRNA(Ile). As IleRS can inadvertently accommodate and process structurally similar amino acids such as valine, to avoid such errors it has two additional distinct tRNA(Ile)-dependent editing activities. One activity is designated as 'pretransfer' editing and involves the hydrolysis of activated Val-AMP. The other activity is designated 'posttransfer' editing and involves deacylation of mischarged Val-tRNA(Ile). The chain is Isoleucine--tRNA ligase from Nitrosococcus oceani (strain ATCC 19707 / BCRC 17464 / JCM 30415 / NCIMB 11848 / C-107).